We begin with the raw amino-acid sequence, 225 residues long: NAD(P)H-quinone oxidoreductase subunit K, chloroplastic (225 aa).

Positions 43, 44, 108, and 139 each coordinate [4Fe-4S] cluster.

Belongs to the complex I 20 kDa subunit family. In terms of assembly, NDH is composed of at least 16 different subunits, 5 of which are encoded in the nucleus. The cofactor is [4Fe-4S] cluster.

Its subcellular location is the plastid. The protein localises to the chloroplast thylakoid membrane. The catalysed reaction is a plastoquinone + NADH + (n+1) H(+)(in) = a plastoquinol + NAD(+) + n H(+)(out). It carries out the reaction a plastoquinone + NADPH + (n+1) H(+)(in) = a plastoquinol + NADP(+) + n H(+)(out). In terms of biological role, NDH shuttles electrons from NAD(P)H:plastoquinone, via FMN and iron-sulfur (Fe-S) centers, to quinones in the photosynthetic chain and possibly in a chloroplast respiratory chain. The immediate electron acceptor for the enzyme in this species is believed to be plastoquinone. Couples the redox reaction to proton translocation, and thus conserves the redox energy in a proton gradient. The protein is NAD(P)H-quinone oxidoreductase subunit K, chloroplastic of Carica papaya (Papaya).